The primary structure comprises 333 residues: Succinylglutamate desuccinylase (333 aa).

3 residues coordinate Zn(2+): His-56, Glu-59, and His-149. Glu-214 is a catalytic residue.

Belongs to the AspA/AstE family. Succinylglutamate desuccinylase subfamily. It depends on Zn(2+) as a cofactor.

The enzyme catalyses N-succinyl-L-glutamate + H2O = L-glutamate + succinate. It functions in the pathway amino-acid degradation; L-arginine degradation via AST pathway; L-glutamate and succinate from L-arginine: step 5/5. Transforms N(2)-succinylglutamate into succinate and glutamate. In Chromobacterium violaceum (strain ATCC 12472 / DSM 30191 / JCM 1249 / CCUG 213 / NBRC 12614 / NCIMB 9131 / NCTC 9757 / MK), this protein is Succinylglutamate desuccinylase.